Consider the following 415-residue polypeptide: Probable tRNA pseudouridine synthase D (415 aa).

Asp-83 (nucleophile) is an active-site residue. The TRUD domain maps to 158–378 (GFPNYFGYQR…PGRRRELLIR (221 aa)).

It belongs to the pseudouridine synthase TruD family.

The catalysed reaction is uridine(13) in tRNA = pseudouridine(13) in tRNA. Could be responsible for synthesis of pseudouridine from uracil-13 in transfer RNAs. The sequence is that of Probable tRNA pseudouridine synthase D from Thermococcus gammatolerans (strain DSM 15229 / JCM 11827 / EJ3).